The chain runs to 163 residues: Nucleotide-binding protein NT01EI_1072 (163 aa).

It belongs to the YajQ family.

In terms of biological role, nucleotide-binding protein. This is Nucleotide-binding protein NT01EI_1072 from Edwardsiella ictaluri (strain 93-146).